A 156-amino-acid chain; its full sequence is Small ribosomal subunit protein uS7 (156 aa).

The protein belongs to the universal ribosomal protein uS7 family. As to quaternary structure, part of the 30S ribosomal subunit. Contacts proteins S9 and S11.

Functionally, one of the primary rRNA binding proteins, it binds directly to 16S rRNA where it nucleates assembly of the head domain of the 30S subunit. Is located at the subunit interface close to the decoding center, probably blocks exit of the E-site tRNA. The protein is Small ribosomal subunit protein uS7 of Lawsonia intracellularis (strain PHE/MN1-00).